The chain runs to 416 residues: Transcription factor IIIB 50 kDa subunit (416 aa).

The segment at N3–T36 adopts a TFIIB-type zinc-finger fold. Zn(2+)-binding residues include C7, C10, C28, and C31. Repeat copies occupy residues D72–V157 and V173–R249. Residues A108 to K114 are interaction with target DNA. A disordered region spans residues A317–E385. S350 is subject to Phosphoserine. Residues L354–L360 are required for the formation of a ternary complex with DNA and TBP; not required for interaction with TBP in the absence of DNA. The residue at position 358 (C358) is a Cysteine sulfenic acid (-SOH). Positions P362–P416 are required for interaction with TBP and formation of a ternary complex with DNA and TBP.

It belongs to the TFIIB family. Component of TFIIIB complexes. The TFIIIB complex has two activities, alpha and beta. The TFIIIB-alpha activity complex is composed of TBP, BDP1, and a complex containing both BRF2 and at least four stably associated proteins; this complex inhibits the transcription by pol III via its phosphorylation by CK2; YY1 facilitates the TFIIIB-alpha complex formation. Interacts with TBP; this interaction promotes recruitment of BRF2 to TATA box-containing promoters. Interacts with TBP and the BURE sequence (GC-rich sequence downstream from the TATA box) to form a strong ternary complex which is joined by BDP1; this ternary complex stimulates pol III transcription. Forms a trimeric complex composed of TBP, BRF2 and mini-SNAPc complex (SNAP43, SNAP50, and the N-terminal third of SNAP190) on the promoter. Assembly of the TBP-BRF2 complex is stimulated by SNAP190. Interacts with MAF1 and SNAPC4. Post-translationally, in response to oxidative stress, Cys-358 is reversibly oxidized to cysteine sulfenic acid. Oxidation of Cys-358 impairs formation of a ternary complex with TBP and DNA and down-regulates expression of target genes in response to oxidative stress.

It is found in the nucleus. General activator of RNA polymerase III transcription. Factor exclusively required for RNA polymerase III transcription of genes with promoter elements upstream of the initiation sites. Contributes to the regulation of gene expression; functions as activator in the absence of oxidative stress. Down-regulates expression of target genes in response to oxidative stress. Overexpression protects cells against apoptosis in response to oxidative stress. The sequence is that of Transcription factor IIIB 50 kDa subunit (Brf2) from Rattus norvegicus (Rat).